A 211-amino-acid chain; its full sequence is Arginine exporter protein ArgO (211 aa).

Transmembrane regions (helical) follow at residues 1–21 (MISY…PLGP), 37–57 (LMIA…GIFG), 68–88 (LLAL…FGAL), 111–131 (IIAT…DTFV), 147–167 (WFAL…ALLA), and 179–199 (AQRI…FQLA).

It belongs to the LysE/ArgO transporter (TC 2.A.75) family.

It localises to the cell inner membrane. It catalyses the reaction L-arginine(in) = L-arginine(out). Its function is as follows. Involved in the export of arginine. Important to control the intracellular level of arginine and the correct balance between arginine and lysine. The chain is Arginine exporter protein ArgO from Salmonella schwarzengrund (strain CVM19633).